A 533-amino-acid chain; its full sequence is Amidophosphoribosyltransferase (533 aa).

The Nucleophile role is filled by cysteine 2. The 237-residue stretch at 2-238 (CGILALMLAD…PGECVFIRRS (237 aa)) folds into the Glutamine amidotransferase type-2 domain. Positions 383 and 384 each coordinate Mg(2+). Serine 506 is subject to Phosphoserine.

It in the C-terminal section; belongs to the purine/pyrimidine phosphoribosyltransferase family. It depends on Mg(2+) as a cofactor.

The enzyme catalyses 5-phospho-beta-D-ribosylamine + L-glutamate + diphosphate = 5-phospho-alpha-D-ribose 1-diphosphate + L-glutamine + H2O. It participates in purine metabolism; IMP biosynthesis via de novo pathway; N(1)-(5-phospho-D-ribosyl)glycinamide from 5-phospho-alpha-D-ribose 1-diphosphate: step 1/2. This Schizosaccharomyces pombe (strain 972 / ATCC 24843) (Fission yeast) protein is Amidophosphoribosyltransferase (ade4).